Here is a 172-residue protein sequence, read N- to C-terminus: S-ribosylhomocysteine lyase (172 aa).

The Fe cation site is built by histidine 54, histidine 58, and cysteine 128.

The protein belongs to the LuxS family. In terms of assembly, homodimer. The cofactor is Fe cation.

The catalysed reaction is S-(5-deoxy-D-ribos-5-yl)-L-homocysteine = (S)-4,5-dihydroxypentane-2,3-dione + L-homocysteine. In terms of biological role, involved in the synthesis of autoinducer 2 (AI-2) which is secreted by bacteria and is used to communicate both the cell density and the metabolic potential of the environment. The regulation of gene expression in response to changes in cell density is called quorum sensing. Catalyzes the transformation of S-ribosylhomocysteine (RHC) to homocysteine (HC) and 4,5-dihydroxy-2,3-pentadione (DPD). In Vibrio alginolyticus, this protein is S-ribosylhomocysteine lyase.